The sequence spans 379 residues: Putative zinc metalloprotease BMEI0829 (379 aa).

Position 33 (histidine 33) interacts with Zn(2+). Residue glutamate 34 is part of the active site. Histidine 37 contacts Zn(2+). Transmembrane regions (helical) follow at residues 39–61 (LVAR…ELLG), 122–144 (VFAG…FALY), 305–327 (FDWL…LFPL), and 355–377 (IFYR…NDLF). Positions 133–208 (TIAIFSVFFA…LNFTVERDGK (76 aa)) constitute a PDZ domain.

This sequence belongs to the peptidase M50B family. It depends on Zn(2+) as a cofactor.

The protein localises to the cell inner membrane. The sequence is that of Putative zinc metalloprotease BMEI0829 from Brucella melitensis biotype 1 (strain ATCC 23456 / CCUG 17765 / NCTC 10094 / 16M).